The following is a 635-amino-acid chain: S-type anion channel SLAH3 (635 aa).

The Cytoplasmic segment spans residues Met1–Pro253. Positions Ser102–Lys121 are enriched in polar residues. The segment at Ser102 to Ala173 is disordered. A compositionally biased stretch (basic residues) spans Asn153–Gly165. The residue at position 189 (Ser189) is a Phosphoserine. Residues Glu193–Thr217 form a disordered region. The chain crosses the membrane as a helical span at residues Phe254–Trp276. The Extracellular segment spans residues Lys277–Trp299. The chain crosses the membrane as a helical span at residues Phe300–Phe320. The Cytoplasmic segment spans residues Phe321–Asn335. A helical transmembrane segment spans residues Phe336 to Ile356. Residues Thr357–Asp358 lie on the Extracellular side of the membrane. A helical transmembrane segment spans residues Leu359–Tyr379. At Gly380–Pro396 the chain is on the cytoplasmic side. The helical transmembrane segment at Thr397–Leu417 threads the bilayer. Topologically, residues Arg418–Glu419 are extracellular. Residues Gly420–Tyr440 form a helical membrane-spanning segment. Residues Gln441–Pro455 lie on the Cytoplasmic side of the membrane. Residues Val456–Gly476 form a helical membrane-spanning segment. Position 477 (Ser477) is a topological domain, extracellular. The chain crosses the membrane as a helical span at residues Phe478 to Val498. Residues Arg499–Arg504 are Cytoplasmic-facing. The helical transmembrane segment at Gly505–Ala525 threads the bilayer. Topologically, residues Thr526–Met541 are extracellular. A helical membrane pass occupies residues Cys542–Ile562. Residues His563–Ser635 lie on the Cytoplasmic side of the membrane. Residues Phe611 to Ser635 form a disordered region. Residues Ser614 to Ser635 are compositionally biased toward polar residues.

Belongs to the SLAC1 S-type anion channel family. In terms of assembly, homotrimer. Interacts with KAT1. Expressed in the whole plant, escpecially in vascular systems.

It is found in the cell membrane. Its function is as follows. Slow, weak voltage-dependent S-type anion efflux channel involved in maintenance of anion homeostasis. Binds to the highly selective inward-rectifying potassium channel KAT1 and inhibits its activity. Functions as an essential negative regulator of inward potassium channels in guard cells. Essential for the efficient stomatal closure and opening in guard cells. The chain is S-type anion channel SLAH3 (SLAH3) from Arabidopsis thaliana (Mouse-ear cress).